The chain runs to 146 residues: Hemoglobin subunit beta (146 aa).

One can recognise a Globin domain in the interval H2 to H146. 2 residues coordinate heme b: H63 and H92.

The protein belongs to the globin family. As to quaternary structure, heterotetramer of two alpha chains and two beta chains. In terms of tissue distribution, red blood cells.

Its function is as follows. Involved in oxygen transport from the lung to the various peripheral tissues. This chain is Hemoglobin subunit beta (HBB), found in Microcephalophis gracilis (Graceful small-headed sea snake).